A 118-amino-acid chain; its full sequence is Large ribosomal subunit protein bL20 (118 aa).

It belongs to the bacterial ribosomal protein bL20 family.

Its function is as follows. Binds directly to 23S ribosomal RNA and is necessary for the in vitro assembly process of the 50S ribosomal subunit. It is not involved in the protein synthesizing functions of that subunit. The sequence is that of Large ribosomal subunit protein bL20 from Pseudomonas aeruginosa (strain LESB58).